The sequence spans 343 residues: Phosphoribosylformylglycinamidine cyclo-ligase (343 aa).

It belongs to the AIR synthase family.

The protein localises to the cytoplasm. It catalyses the reaction 2-formamido-N(1)-(5-O-phospho-beta-D-ribosyl)acetamidine + ATP = 5-amino-1-(5-phospho-beta-D-ribosyl)imidazole + ADP + phosphate + H(+). The protein operates within purine metabolism; IMP biosynthesis via de novo pathway; 5-amino-1-(5-phospho-D-ribosyl)imidazole from N(2)-formyl-N(1)-(5-phospho-D-ribosyl)glycinamide: step 2/2. The chain is Phosphoribosylformylglycinamidine cyclo-ligase from Staphylococcus epidermidis (strain ATCC 35984 / DSM 28319 / BCRC 17069 / CCUG 31568 / BM 3577 / RP62A).